The chain runs to 432 residues: Enolase 2 (432 aa).

Gln163 is a (2R)-2-phosphoglycerate binding site. Glu205 (proton donor) is an active-site residue. Asp242, Glu287, and Asp314 together coordinate Mg(2+). The (2R)-2-phosphoglycerate site is built by Lys339, Arg368, Ser369, and Lys390. Lys339 acts as the Proton acceptor in catalysis.

The protein belongs to the enolase family. In terms of assembly, homodimer. Probably forms octamers. Requires Mg(2+) as cofactor.

It localises to the cytoplasm. Its subcellular location is the secreted. The protein resides in the cell surface. It catalyses the reaction (2R)-2-phosphoglycerate = phosphoenolpyruvate + H2O. It functions in the pathway carbohydrate degradation; glycolysis; pyruvate from D-glyceraldehyde 3-phosphate: step 4/5. Catalyzes the reversible conversion of 2-phosphoglycerate (2-PG) into phosphoenolpyruvate (PEP). It is essential for the degradation of carbohydrates via glycolysis. The chain is Enolase 2 from Lactobacillus gasseri (strain ATCC 33323 / DSM 20243 / BCRC 14619 / CIP 102991 / JCM 1131 / KCTC 3163 / NCIMB 11718 / NCTC 13722 / AM63).